The sequence spans 158 residues: MARFEDPTRRPYKLPDLCTELNTSLQDIEITCVYCKTVLELTEVFEFAFKDLFVVYRDSIPHAACHKCIDFYSRIRELRHYSDSVYGDTLEKLTNTGLYNLLIRCLRCQKPLNPAEKLRHLNEKRRFHNIAGHYRGQCHSCCNRARQERLQRRRETQV.

Zinc fingers lie at residues 32 to 68 (CVYC…CHKC) and 105 to 141 (CLRC…CHSC). The PDZ-binding domain motif lies at 156–158 (TQV).

It belongs to the papillomaviridae E6 protein family. Forms homodimers. Interacts with ubiquitin-protein ligase UBE3A/E6-AP and thus forms a complex with human TP53. Interacts with human NFX1 and MAGI3. Interacts with human IRF3; this interaction inhibits the establishment of antiviral state. Interacts with human TYK2; this interaction inhibits JAK-STAT activation by interferon alpha. Interacts with host DLG1; this interaction leads to the proteasomal degradation of DLG1.

Its subcellular location is the host cytoplasm. It is found in the host nucleus. In terms of biological role, plays a major role in the induction and maintenance of cellular transformation. Acts mainly as an oncoprotein by stimulating the destruction of many host cell key regulatory proteins. E6 associates with host UBE3A/E6-AP ubiquitin-protein ligase, and inactivates tumor suppressors TP53 and TP73 by targeting them to the 26S proteasome for degradation. In turn, DNA damage and chromosomal instabilities increase and lead to cell proliferation and cancer development. The complex E6/E6AP targets several other substrates to degradation via the proteasome including host DLG1 or NFX1, a repressor of human telomerase reverse transcriptase (hTERT). The resulting increased expression of hTERT prevents the shortening of telomere length leading to cell immortalization. Other cellular targets including BAK1, Fas-associated death domain-containing protein (FADD) and procaspase 8, are degraded by E6/E6AP causing inhibition of apoptosis. E6 also inhibits immune response by interacting with host IRF3 and TYK2. These interactions prevent IRF3 transcriptional activities and inhibit TYK2-mediated JAK-STAT activation by interferon alpha resulting in inhibition of the interferon signaling pathway. In Homo sapiens (Human), this protein is Protein E6.